Consider the following 514-residue polypeptide: Chromosomal replication initiator protein DnaA (514 aa).

The segment at 1–90 (MSVELWQQCV…KRSRTPRAAI (90 aa)) is domain I, interacts with DnaA modulators. Residues 91-177 (VPSQTHVAPP…QVEGALKHTS (87 aa)) are domain II. The tract at residues 178 to 394 (YLNRTFTFEN…GALKRVIAHS (217 aa)) is domain III, AAA+ region. Residues glycine 222, glycine 224, lysine 225, and threonine 226 each coordinate ATP. A domain IV, binds dsDNA region spans residues 395-514 (HFMGRPITIE…YKNLLRTLTT (120 aa)).

Belongs to the DnaA family. In terms of assembly, oligomerizes as a right-handed, spiral filament on DNA at oriC.

It localises to the cytoplasm. In terms of biological role, plays an essential role in the initiation and regulation of chromosomal replication. ATP-DnaA binds to the origin of replication (oriC) to initiate formation of the DNA replication initiation complex once per cell cycle. Binds the DnaA box (a 9 base pair repeat at the origin) and separates the double-stranded (ds)DNA. Forms a right-handed helical filament on oriC DNA; dsDNA binds to the exterior of the filament while single-stranded (ss)DNA is stabiized in the filament's interior. The ATP-DnaA-oriC complex binds and stabilizes one strand of the AT-rich DNA unwinding element (DUE), permitting loading of DNA polymerase. After initiation quickly degrades to an ADP-DnaA complex that is not apt for DNA replication. Binds acidic phospholipids. The polypeptide is Chromosomal replication initiator protein DnaA (Pseudomonas aeruginosa (strain LESB58)).